The sequence spans 4243 residues: Fibrocystin-L (4243 aa).

An N-terminal signal peptide occupies residues 1-20 (MGHLWLLGIWGLCGLLLCAA). At 21–4210 (DPSTDGSQII…KASTVGTYAQ (4190 aa)) the chain is on the extracellular side. 3 IPT/TIG domains span residues 31 to 129 (PKVT…TCKG), 146 to 255 (PTIR…KMAY), and 270 to 361 (AEVT…ILEY). O-linked (GalNAc...) threonine glycosylation is present at Thr-122. Residues 337 to 492 (PGGRGLKLEV…NVYTEQQTGD (156 aa)) enclose the PA14 domain. O-linked (GalNAc...) threonine glycosylation is present at Thr-445. IPT/TIG domains follow at residues 1067-1151 (PLVL…EFYF), 1155-1234 (SQIS…AFSY), 1240-1322 (PIIT…RDKL), 1330-1469 (LEVT…SFSY), 1566-1649 (PSIS…TLSN), 1659-1743 (PNID…TFSY), 1749-1828 (PYIT…NLTV), 1831-1910 (PPVA…LFTY), 1916-1997 (PFLR…VFEY), 1999-2085 (LNIQ…PFTY), and 2091-2176 (PLIT…DFLY). O-linked (GalNAc...) threonine glycans are attached at residues Thr-1803 and Thr-1839. One can recognise a G8 1 domain in the interval 2184–2304 (FSWGGKSPPE…VPVTWTRLAH (121 aa)). O-linked (GalNAc...) threonine glycosylation occurs at Thr-2320. 4 PbH1 repeats span residues 2508-2530 (THHL…FIED), 2566-2588 (NPNN…WYRM), 2665-2687 (GGAL…ETKR), and 2733-2756 (SEGL…ALGV). The region spanning 3036–3174 (SFWQSSRENN…HSIYKTKLSE (139 aa)) is the G8 2 domain. 5 PbH1 repeats span residues 3293–3315 (KGNA…RDST), 3355–3377 (TDGL…RIWG), 3416–3438 (GTNT…RIDG), 3471–3493 (PGCS…YFQT), and 3527–3548 (SKNV…NCSD). An O-linked (GalNAc...) threonine glycan is attached at Thr-3736. The helical transmembrane segment at 4211–4231 (IMTVVISCLVGRMWLLEIFMA) threads the bilayer. The Cytoplasmic segment spans residues 4232–4243 (AVSTLNITLRSY).

It localises to the membrane. The protein localises to the cell projection. Its subcellular location is the stereocilium membrane. Component of hair-cell stereocilia coat. Required for normal hearing. The polypeptide is Fibrocystin-L (PKHD1L1) (Homo sapiens (Human)).